A 359-amino-acid polypeptide reads, in one-letter code: Peptide chain release factor 1 (359 aa).

Gln-235 is subject to N5-methylglutamine. Positions Ala-287 to Phe-312 are disordered.

This sequence belongs to the prokaryotic/mitochondrial release factor family. Methylated by PrmC. Methylation increases the termination efficiency of RF1.

The protein resides in the cytoplasm. Its function is as follows. Peptide chain release factor 1 directs the termination of translation in response to the peptide chain termination codons UAG and UAA. The polypeptide is Peptide chain release factor 1 (Chlamydia trachomatis serovar L2 (strain ATCC VR-902B / DSM 19102 / 434/Bu)).